We begin with the raw amino-acid sequence, 486 residues long: UDP-N-acetylmuramate--L-alanine ligase (486 aa).

ATP is bound at residue Gly-129–Thr-135.

It belongs to the MurCDEF family.

Its subcellular location is the cytoplasm. The enzyme catalyses UDP-N-acetyl-alpha-D-muramate + L-alanine + ATP = UDP-N-acetyl-alpha-D-muramoyl-L-alanine + ADP + phosphate + H(+). It participates in cell wall biogenesis; peptidoglycan biosynthesis. In terms of biological role, cell wall formation. The polypeptide is UDP-N-acetylmuramate--L-alanine ligase (Vibrio cholerae serotype O1 (strain ATCC 39315 / El Tor Inaba N16961)).